The sequence spans 719 residues: Pesticidal crystal protein Cry1Ib (719 aa).

The protein belongs to the delta endotoxin family.

Promotes colloidosmotic lysis by binding to the midgut epithelial cells of certain coleopteran and lepidopteran species. Active on Plutella xylostella but not on Bombyx mori. This is Pesticidal crystal protein Cry1Ib (cry1Ib) from Bacillus thuringiensis subsp. entomocidus.